A 217-amino-acid chain; its full sequence is Ribosomal RNA small subunit methyltransferase G (217 aa).

Residues Gly78, Phe83, Gly129–Glu130, and Arg146 each bind S-adenosyl-L-methionine.

It belongs to the methyltransferase superfamily. RNA methyltransferase RsmG family.

The protein localises to the cytoplasm. It carries out the reaction guanosine(527) in 16S rRNA + S-adenosyl-L-methionine = N(7)-methylguanosine(527) in 16S rRNA + S-adenosyl-L-homocysteine. In terms of biological role, specifically methylates the N7 position of guanine in position 527 of 16S rRNA. This Geobacter sulfurreducens (strain ATCC 51573 / DSM 12127 / PCA) protein is Ribosomal RNA small subunit methyltransferase G.